The primary structure comprises 143 residues: Transcriptional regulator MraZ (143 aa).

SpoVT-AbrB domains lie at 5–47 and 76–119; these read EYQH…PKDE and AIES…SKDN.

Belongs to the MraZ family. In terms of assembly, forms oligomers.

The protein localises to the cytoplasm. The protein resides in the nucleoid. The chain is Transcriptional regulator MraZ from Oenococcus oeni (strain ATCC BAA-331 / PSU-1).